We begin with the raw amino-acid sequence, 167 residues long: Small ribosomal subunit protein uS5 (167 aa).

One can recognise an S5 DRBM domain in the interval 12–75; sequence LQEKLIAVNR…EKARRNMVTI (64 aa).

The protein belongs to the universal ribosomal protein uS5 family. As to quaternary structure, part of the 30S ribosomal subunit. Contacts proteins S4 and S8.

In terms of biological role, with S4 and S12 plays an important role in translational accuracy. Its function is as follows. Located at the back of the 30S subunit body where it stabilizes the conformation of the head with respect to the body. The protein is Small ribosomal subunit protein uS5 of Vibrio vulnificus (strain CMCP6).